The following is a 347-amino-acid chain: Membrane progestin receptor gamma-B (347 aa).

Topologically, residues 1-52 (MLSLIKLQRVFNVHQVPKAFHEDGIISGYRHPRSSATECVWSLFQLTNETLN) are cytoplasmic. Residues 53–73 (VWTHFLPTWYFLWKLMTVLLM) form a helical membrane-spanning segment. Over 74-81 (EDVWNEAY) the chain is Extracellular. A helical membrane pass occupies residues 82–102 (TWPLLVFLFSCCVYPLASSCA). Residues 103-114 (HTFSSMSTRARH) lie on the Cytoplasmic side of the membrane. Residues 115 to 135 (ICYFFDYGALSFYSLGSAISY) form a helical membrane-spanning segment. Topologically, residues 136–138 (SAY) are extracellular. Residues 139–159 (VFPDAWLSSSFHAYYISVAVF) traverse the membrane as a helical segment. At 160 to 201 (NTVLSTSLACYSRLGLPLLHYSHDIVERFSERQCPRMSKVLR) the chain is on the cytoplasmic side. Residues 202 to 222 (ILAFAYPYLFDNIPLFYRLFV) form a helical membrane-spanning segment. The Extracellular portion of the chain corresponds to 223–235 (CVGEGCTDNEANS). A helical membrane pass occupies residues 236-256 (VHVQHTLLAFLTSFLFATHLP). At 257–314 (ERLAPGRFDYIGHSHQLFHVCAIIGTHFQMKAIEMDMGLRRSQLLASAPAISFNNTIG) the chain is on the cytoplasmic side. A helical transmembrane segment spans residues 315-335 (AALLCVSVSLGIICVYSLPLL). The Extracellular segment spans residues 336 to 347 (YSSNPKNTANKE).

This sequence belongs to the ADIPOR family.

It is found in the membrane. In terms of biological role, steroid membrane receptor. Binds progesterone. May be involved in oocyte maturation. The sequence is that of Membrane progestin receptor gamma-B from Danio rerio (Zebrafish).